A 663-amino-acid chain; its full sequence is RING finger protein 145 (663 aa).

The next 14 helical transmembrane spans lie at 53–73 (YLAL…LTLP), 77–97 (LVQL…HQIS), 123–143 (FTTA…VMKT), 146–166 (IWLF…VPLE), 168–188 (IVII…YFLG), 205–222 (LVQV…MSLW), 225–245 (LVVP…QIYS), 275–295 (YSLL…LTLC), 316–336 (TEGV…LQVV), 340–360 (FLLS…MLEI), 384–404 (SLCL…CQFF), 410–430 (LLII…TLFI), 460–480 (LLEF…TIFG), and 482–502 (WTVM…WLRA). The YLYF motif signature appears at 81 to 84 (YLYF). Cys-537 is an active-site residue. The RING-type; atypical zinc-finger motif lies at 537–575 (CAICYQDMKSAVITPCSHFFHAGCLKKWLYVQDTCPLCH). A disordered region spans residues 587-663 (LGTEAAPQPP…EGEVCPVESA (77 aa)). Over residues 619 to 628 (GTGTQEGSGD) the composition is skewed to polar residues.

Interacts (via YLYF motif) with INSIG1 and INSIG2.

The protein resides in the endoplasmic reticulum membrane. It catalyses the reaction S-ubiquitinyl-[E2 ubiquitin-conjugating enzyme]-L-cysteine + [acceptor protein]-L-lysine = [E2 ubiquitin-conjugating enzyme]-L-cysteine + N(6)-ubiquitinyl-[acceptor protein]-L-lysine.. In terms of biological role, E3 ubiquitin ligase that catalyzes the direct transfer of ubiquitin from E2 ubiquitin-conjugating enzyme to a specific substrate. In response to bacterial infection, negatively regulates the phagocyte oxidative burst by controlling the turnover of the NADPH oxidase complex subunits. Promotes monoubiquitination of CYBA and 'Lys-48'-linked polyubiquitination and degradation of CYBB NADPH oxidase catalytic subunits, both essential for the generation of antimicrobial reactive oxygen species. Involved in the maintenance of cholesterol homeostasis. In response to high sterol concentrations ubiquitinates HMGCR, a rate-limiting enzyme in cholesterol biosynthesis, and targets it for degradation. The interaction with INSIG1 is required for this function. In addition, triggers ubiquitination of SCAP, likely inhibiting its transport to the Golgi apparatus and the subsequent processing/maturation of SREBPF2, ultimately down-regulating cholesterol biosynthesis. In Mus musculus (Mouse), this protein is RING finger protein 145.